The following is a 363-amino-acid chain: NAD(P)H-quinone oxidoreductase subunit 1, chloroplastic (363 aa).

Helical transmembrane passes span 26-46, 98-118, 127-147, 246-266, 268-288, 300-320, and 336-356; these read IIWILIPIFTLVLGITIGVLV, FSIGPSIAVISILLSYSVIPF, LTIGVFLWIAISSIAPIGLLM, TEYSGIKFGLFYVASYLNLLV, SLFVTVLYLGGWNLSIPYIFV, VFGPVIGIFITLAKTYLFLFI, and LLNLGWKFLLPISLGNLLLTT.

It belongs to the complex I subunit 1 family. NDH is composed of at least 16 different subunits, 5 of which are encoded in the nucleus.

It localises to the plastid. Its subcellular location is the chloroplast thylakoid membrane. It catalyses the reaction a plastoquinone + NADH + (n+1) H(+)(in) = a plastoquinol + NAD(+) + n H(+)(out). The enzyme catalyses a plastoquinone + NADPH + (n+1) H(+)(in) = a plastoquinol + NADP(+) + n H(+)(out). Its function is as follows. NDH shuttles electrons from NAD(P)H:plastoquinone, via FMN and iron-sulfur (Fe-S) centers, to quinones in the photosynthetic chain and possibly in a chloroplast respiratory chain. The immediate electron acceptor for the enzyme in this species is believed to be plastoquinone. Couples the redox reaction to proton translocation, and thus conserves the redox energy in a proton gradient. This Coffea arabica (Arabian coffee) protein is NAD(P)H-quinone oxidoreductase subunit 1, chloroplastic.